We begin with the raw amino-acid sequence, 1560 residues long: Lysine-specific demethylase 5C (1560 aa).

In terms of domain architecture, JmjN spans 14 to 55; that stretch reads CPVFEPSWAEFRDPLGYIAKIRPIAEKSGICKIRPPADWQPP. The ARID domain occupies 79–169; sequence TRVKLNYLDQ…IVYPYEMYQS (91 aa). The span at 197 to 207 shows a compositional bias: polar residues; the sequence is LRQSVQPSKFN. A disordered region spans residues 197–227; sequence LRQSVQPSKFNSYGRRAKRLQPDPEPTEEDI. Residues K205, K229, K244, and K274 each participate in a glycyl lysine isopeptide (Lys-Gly) (interchain with G-Cter in SUMO2) cross-link. A Phosphoserine modification is found at S287. K295 is covalently cross-linked (Glycyl lysine isopeptide (Lys-Gly) (interchain with G-Cter in SUMO2)). S301 and S317 each carry phosphoserine. The PHD-type 1 zinc finger occupies 326-372; it reads VCRMCSRGDEDDKLLLCDGCDDNYHIFCLLPPLPEIPKGVWRCPKCV. Position 440 (Y440) interacts with 2-oxoglutarate. In terms of domain architecture, JmjC spans 468–634; the sequence is EYATSGWNLN…AGRQCIEHYR (167 aa). H514 and E516 together coordinate Fe cation. 2-oxoglutarate is bound by residues S522, N524, and K532. H602 lines the Fe cation pocket. The segment at 707-759 adopts a C5HC2 zinc-finger fold; it reads CIKCKTTCFLSALACYDCPDGLVCLSHINDLCKCSSSRQYLRYRYTLDELPAM. Phosphoserine occurs at positions 893 and 897. Residue K1127 forms a Glycyl lysine isopeptide (Lys-Gly) (interchain with G-Cter in SUMO2) linkage. The disordered stretch occupies residues 1161 to 1181; the sequence is ILQLRRTNSAKPSPLASSSTA. Low complexity predominate over residues 1169–1181; it reads SAKPSPLASSSTA. The PHD-type 2 zinc finger occupies 1187–1248; sequence ICVCGQVLAG…DTKFLCPLCM (62 aa). Disordered regions lie at residues 1316-1371 and 1444-1560; these read QAEP…GSGK and ERHG…QQQL. Basic and acidic residues predominate over residues 1335–1345; the sequence is PLREGSGKDMP. The residue at position 1359 (S1359) is a Phosphoserine. The segment covering 1448-1463 has biased composition (basic residues); sequence SRARGRALERRRRRKV. Over residues 1464–1481 the composition is skewed to basic and acidic residues; sequence DRGGEGDDPAREELEPKR. The segment covering 1488-1503 has biased composition (acidic residues); the sequence is EAEEVQEEEELEEETG. The segment covering 1516–1544 has biased composition (polar residues); sequence SPSTQENQNGLEPAEGTTSGPSAPFSTLT.

It belongs to the JARID1 histone demethylase family. Part of two distinct complexes, one containing E2F6, and the other containing REST. Interacts with ZMYND8. Fe(2+) is required as a cofactor. In terms of tissue distribution, expressed in all tissues examined. Highest levels found in brain and skeletal muscle.

Its subcellular location is the nucleus. The catalysed reaction is N(6),N(6),N(6)-trimethyl-L-lysyl(4)-[histone H3] + 3 2-oxoglutarate + 3 O2 = L-lysyl(4)-[histone H3] + 3 formaldehyde + 3 succinate + 3 CO2. The inhibitor KDOAM-25 and others inhibit its demethylase activity, resulting to cell cycle arrest in myeloma cells. Its function is as follows. Histone demethylase that specifically demethylates 'Lys-4' of histone H3, thereby playing a central role in histone code. Does not demethylate histone H3 'Lys-9', H3 'Lys-27', H3 'Lys-36', H3 'Lys-79' or H4 'Lys-20'. Demethylates trimethylated and dimethylated but not monomethylated H3 'Lys-4'. Participates in transcriptional repression of neuronal genes by recruiting histone deacetylases and REST at neuron-restrictive silencer elements. Represses the CLOCK-BMAL1 heterodimer-mediated transcriptional activation of the core clock component PER2. This chain is Lysine-specific demethylase 5C, found in Homo sapiens (Human).